Here is a 371-residue protein sequence, read N- to C-terminus: Transaldolase (371 aa).

Catalysis depends on K140, which acts as the Schiff-base intermediate with substrate.

This sequence belongs to the transaldolase family. Type 2 subfamily.

It is found in the cytoplasm. The enzyme catalyses D-sedoheptulose 7-phosphate + D-glyceraldehyde 3-phosphate = D-erythrose 4-phosphate + beta-D-fructose 6-phosphate. It participates in carbohydrate degradation; pentose phosphate pathway; D-glyceraldehyde 3-phosphate and beta-D-fructose 6-phosphate from D-ribose 5-phosphate and D-xylulose 5-phosphate (non-oxidative stage): step 2/3. Functionally, transaldolase is important for the balance of metabolites in the pentose-phosphate pathway. The sequence is that of Transaldolase from Frankia alni (strain DSM 45986 / CECT 9034 / ACN14a).